The sequence spans 470 residues: Cytochrome P450 monooxygenase FUM2 (470 aa).

Position 414 (Cys414) interacts with heme.

It belongs to the cytochrome P450 family. The cofactor is heme.

Its pathway is mycotoxin biosynthesis. In terms of biological role, cytochrome P450 monooxygenase; part of the gene cluster that mediates the biosynthesis of fumonisins B1 (FB1), B2 (FB2), B3 (FB3), and B4 (FB4), which are carcinogenic mycotoxins. Within the pathway, FUM2 performs the C-10 hydroxylation present in FB2 and FB4 and which occurs early in the biosynthesis. The biosynthesis starts with the FUM1-catalyzed carbon chain assembly from one molecule of acetyl-CoA, eight molecules of malonyl-CoA, and two molecules of methionine (in S-adenosyl form). The C18 polyketide chain is released from the enzyme by a nucleophilic attack of a carbanion, which is derived from R-carbon of alanine by decarboxylation, on the carbonyl carbon of polyketide acyl chain. This step is catalyzed by the pyridoxal 5'-phosphate-dependent aminoacyl transferase FUM8. The resultant 3-keto intermediate is then stereospecifically reduced to a 3-hydroxyl product by reductase FUM13. Subsequent oxidations at C-10 by the cytochrome P450 monooxygenase FUM2, C-14 and C-15 by FUM6, FUM12 or FUM15, tricarballylic esterification of the hydroxyl groups on C-14 and C-15 by acyltransferase FUM14, and C-5 hydroxylation by 2-keto-glutarate-dependent dioxygenase FUM3 furnish the biosynthesis of fumonisins. The tricarballylic moieties are most likely derived from the citric acid cycle, and their addition to the carbon backbone may involve FUM7, FUM10, FUM11 and FUM14. The protein is Cytochrome P450 monooxygenase FUM2 of Gibberella moniliformis (strain M3125 / FGSC 7600) (Maize ear and stalk rot fungus).